The sequence spans 596 residues: Ubiquilin-4 (596 aa).

In terms of domain architecture, Ubiquitin-like spans 13–87; that stretch reads IRVTVKTPKD…VHLVIKTPQK (75 aa). Residues Lys23 and Lys62 each participate in a glycyl lysine isopeptide (Lys-Gly) (interchain with G-Cter in SUMO2) cross-link. A disordered region spans residues 89–148; the sequence is QDPVTAAASPPSTPDSASAPSTTPASPAAAPVQPCSSGNTTSDAGSGGGPSPVAAEGPSS. Composition is skewed to low complexity over residues 93–119 and 139–148; these read TAAA…AAAP and SPVAAEGPSS. Ser139 is subject to Phosphoserine. STI1 domains are found at residues 187–224 and 225–256; these read NPEM…QQLM and ERNP…MQEM. The residue at position 282 (Thr282) is a Phosphothreonine. The tract at residues 297–361 is disordered; the sequence is GNNPFSSLAG…QVHPTVSNPF (65 aa). Positions 302–313 are enriched in low complexity; that stretch reads SSLAGNSDNSSS. At Ser313 the chain carries Phosphoserine. The segment covering 324–335 has biased composition (pro residues); the sequence is LPNPWSPSPPTS. Positions 339–349 are enriched in gly residues; it reads GSGGEGTGGSG. Residues 352–361 are compositionally biased toward polar residues; it reads QVHPTVSNPF. 2 STI1 domains span residues 388-435 and 439-471; these read NPQL…QEQL and LPVF…QQGL. Positions 482 to 528 are disordered; that stretch reads VPSLGSFGTPRTSVPLAGSNSGSSAEAPTSSPGVPATSPPSAGSNAQ. Positions 499–513 are enriched in polar residues; the sequence is GSNSGSSAEAPTSSP. In terms of domain architecture, UBA spans 548–593; sequence PMPEVRFQQQLEQLNSMGFINREANLQALIATGGDINAAIERLLGS.

Homooligomer. Binds signal sequences of proteins that are targeted to the endoplasmic reticulum. Interacts (via UBA domain) with GJA1 (not ubiquitinated) and with ubiquitin; both compete for the same binding site. Interacts (via UBA domain) with ubiquitin and with polyubiquitin chains. Interacts (via ubiquitin-like domain) with PSMD2 and PSMD4, regulatory subunits of the 26S proteasome. Interacts with ATXN1/SCA1; interaction with ATXN1 inhibits polyubiquitination of UBQLN4 and interferes with PSMD4 binding. Interacts with HERPUD1. Interacts (via ubiquitin-like domain) with UBQLN1 (via UBA domain). Interacts with UBQLN2. Interacts (via STI1 1 and 2 domains) with MAP1LC3A/B/C. Interacts with BAG6. Interacts with MRE11 (when ubiquitinated); interaction with ubiquitinated MRE11 leads to MRE11 removal from chromatin. Interacts with DESI1/POST; leading to nuclear export. Interacts with BCL2A1 and BCL2L10. In terms of processing, phosphorylated by ATM at Ser-313 in response to DNA damage, leading to localization in the nucleus and recruitment to sites of DNA damage. Post-translationally, ubiquitinated; this does not lead to proteasomal degradation. May undergo both 'Lys-48'- and 'Lys-63'-linked polyubiquitination. Detected in testis, ovary, thyroid, kidney, thymus, heart, liver, lung and spleen (at protein level). Highly expressed in heart, skeletal muscle, kidney, liver and brain. Detected at lower levels in testis, lung and spleen.

The protein resides in the nucleus. It is found in the cytoplasm. It localises to the chromosome. Its subcellular location is the endoplasmic reticulum. The protein localises to the perinuclear region. The protein resides in the cytoplasmic vesicle. It is found in the autophagosome. Functionally, regulator of protein degradation that mediates the proteasomal targeting of misfolded, mislocalized or accumulated proteins. Acts by binding polyubiquitin chains of target proteins via its UBA domain and by interacting with subunits of the proteasome via its ubiquitin-like domain. Key regulator of DNA repair that represses homologous recombination repair: in response to DNA damage, recruited to sites of DNA damage following phosphorylation by ATM and acts by binding and removing ubiquitinated MRE11 from damaged chromatin, leading to MRE11 degradation by the proteasome. MRE11 degradation prevents homologous recombination repair, redirecting double-strand break repair toward non-homologous end joining (NHEJ). Specifically recognizes and binds mislocalized transmembrane-containing proteins and targets them to proteasomal degradation. Collaborates with DESI1/POST in the export of ubiquitinated proteins from the nucleus to the cytoplasm. Plays a role in the regulation of the proteasomal degradation of non-ubiquitinated GJA1. Acts as an adapter protein that recruits UBQLN1 to the autophagy machinery. Mediates the association of UBQLN1 with autophagosomes and the autophagy-related protein LC3 (MAP1LC3A/B/C) and may assist in the maturation of autophagosomes to autolysosomes by mediating autophagosome-lysosome fusion. The chain is Ubiquilin-4 from Mus musculus (Mouse).